The primary structure comprises 398 residues: Type II secretion system protein L (398 aa).

The Cytoplasmic portion of the chain corresponds to 1–248 (MNNHHTSSAA…RQPTPRRWRP (248 aa)). A helical membrane pass occupies residues 249 to 265 (VIVAALALLLLWSSNCL). The Periplasmic portion of the chain corresponds to 266–398 (HDHLMLGQQA…GRLTLEGNDA (133 aa)).

This sequence belongs to the GSP L family. Type II secretion system is composed of four main components: the outer membrane complex, the inner membrane complex, the cytoplasmic secretion ATPase and the periplasm-spanning pseudopilus. Forms homodimers. Interacts with PulM/GspM. Interacts with PulE/GspE and PulF/GspF.

The protein resides in the cell inner membrane. Functionally, inner membrane component of the type II secretion system required for the energy-dependent secretion of extracellular factors such as proteases and toxins from the periplasm. Plays a role in the complex assembly and recruits PulM resulting in a stable complex in the inner membrane. Provides thus a link between the energy-providing PulE protein in the cytoplasm and the rest of the T2SS machinery. This is Type II secretion system protein L (pulL) from Klebsiella pneumoniae.